Reading from the N-terminus, the 364-residue chain is Peroxisome biogenesis protein 3-2 (364 aa).

A helical transmembrane segment spans residues valine 15–tyrosine 32. The stretch at asparagine 33–alanine 62 forms a coiled coil.

It belongs to the peroxin-3 family.

It is found in the peroxisome membrane. Involved in morphology determination of peroxisomes, but not in import of peroxisomal matrix proteins. May act as a docking factor for PEX19 and be necessary for the import of peroxisomal membrane proteins in the peroxisomes. This is Peroxisome biogenesis protein 3-2 (PEX3-2) from Arabidopsis thaliana (Mouse-ear cress).